Consider the following 90-residue polypeptide: Probable Fe(2+)-trafficking protein (90 aa).

The protein belongs to the Fe(2+)-trafficking protein family.

Functionally, could be a mediator in iron transactions between iron acquisition and iron-requiring processes, such as synthesis and/or repair of Fe-S clusters in biosynthetic enzymes. This chain is Probable Fe(2+)-trafficking protein, found in Polaromonas sp. (strain JS666 / ATCC BAA-500).